The sequence spans 119 residues: Large ribosomal subunit protein uL18 (119 aa).

It belongs to the universal ribosomal protein uL18 family. As to quaternary structure, part of the 50S ribosomal subunit; part of the 5S rRNA/L5/L18/L25 subcomplex. Contacts the 5S and 23S rRNAs.

In terms of biological role, this is one of the proteins that bind and probably mediate the attachment of the 5S RNA into the large ribosomal subunit, where it forms part of the central protuberance. This chain is Large ribosomal subunit protein uL18, found in Ruegeria pomeroyi (strain ATCC 700808 / DSM 15171 / DSS-3) (Silicibacter pomeroyi).